The primary structure comprises 476 residues: Ureidoglycolate hydrolase (476 aa).

An N-terminal signal peptide occupies residues methionine 1–alanine 25. Mn(2+) is bound by residues histidine 138, aspartate 149, glutamate 184, and histidine 254. Residues glutamate 183–glutamate 184, histidine 254–glutamine 257, histidine 290, asparagine 340, arginine 353, tyrosine 423–histidine 424, and histidine 448 contribute to the substrate site. The interval alanine 276–aspartate 391 is involved in dimerization. Histidine 448 lines the Mn(2+) pocket.

This sequence belongs to the peptidase M20 family. In terms of assembly, homodimer. Requires Mn(2+) as cofactor. Ni(2+) is required as a cofactor. Co(2+) serves as cofactor.

Its subcellular location is the endoplasmic reticulum. It catalyses the reaction (S)-ureidoglycolate + H2O + 2 H(+) = glyoxylate + 2 NH4(+) + CO2. It participates in nitrogen metabolism; (S)-allantoin degradation; glyoxylate from (S)-ureidoglycolate: step 1/1. In terms of biological role, involved in the catabolism of purine nucleotides. Can use (S)-ureidoglycolate as substrate, but not (R)-ureidoglycolate or allantoate. The sequential activity of AAH, UGLYAH and UAH allows a complete purine breakdown without the intermediate generation of urea. This chain is Ureidoglycolate hydrolase, found in Arabidopsis thaliana (Mouse-ear cress).